We begin with the raw amino-acid sequence, 295 residues long: Chromatin modification-related protein YNG2 (295 aa).

The segment at 151–208 (NGTAGSGSSSGRKRPASSSSANGKGQKRKQQKKERSRSHQRAGTVSRDVSPNAGIGRD) is disordered. The segment covering 156-171 (SGSSSGRKRPASSSSA) has biased composition (low complexity). Over residues 175–190 (GQKRKQQKKERSRSHQ) the composition is skewed to basic residues. The PHD-type zinc-finger motif lies at 233–282 (QLYCFCQRVSYGEMVACDGPNCKYEWFHYSCVNLTEPPKGQWYCPECRLE). Zn(2+) contacts are provided by Cys236, Cys238, Cys249, Cys254, His260, Cys263, Cys276, and Cys279.

Belongs to the ING family. As to quaternary structure, interacts with H3K4me3 and to a lesser extent with H3K4me2. Component of the NuA4 histone acetyltransferase complex.

It is found in the nucleus. Its function is as follows. Component of the NuA4 histone acetyltransferase complex which is involved in transcriptional activation of selected genes principally by acetylation of nucleosomal histone H4 and H2A. The NuA4 complex is also involved in DNA repair. Involved in cell cycle progression and meiosis. In Kluyveromyces lactis (strain ATCC 8585 / CBS 2359 / DSM 70799 / NBRC 1267 / NRRL Y-1140 / WM37) (Yeast), this protein is Chromatin modification-related protein YNG2 (YNG2).